Reading from the N-terminus, the 233-residue chain is MSTESMIRDVELAEEALSKTAGGSQGSGRCLCLSLFSFFLVAGGTTLFCLLHFGVIGPQREEFPTGYSIISPLAQTLRSSSKTSSNKPVAHVVANLSAQGQLRWLNTYANTLLANSVKLEDNQLVVPTDGLYLIYSQVLFRGQGCPSTHLFLTHTISRIAVSYQTKVNLLSAIKSPCQRETPEGAEAKPWYEPIYQGGVFQLEKGDRLSAEINLPDYLDFAESGQVYFGIIAL.

Topologically, residues 1-35 are cytoplasmic; it reads MSTESMIRDVELAEEALSKTAGGSQGSGRCLCLSL. Serine 2 bears the Phosphoserine; by CK1 mark. Lysine 19 carries N6-myristoyl lysine lipidation. Residues 36–56 form a helical; Signal-anchor for type II membrane protein membrane-spanning segment; it reads FSFFLVAGGTTLFCLLHFGVI. Residues 57 to 233 are Extracellular-facing; the sequence is GPQREEFPTG…GQVYFGIIAL (177 aa). Serine 80 carries O-linked (GalNAc...) serine; in soluble form glycosylation. In terms of domain architecture, THD spans 88 to 233; the sequence is PVAHVVANLS…GQVYFGIIAL (146 aa). Asparagine 95 carries an N-linked (GlcNAc...) asparagine glycan. A disulfide bond links cysteine 145 and cysteine 177.

It belongs to the tumor necrosis factor family. In terms of assembly, homotrimer. Interacts with SPPL2B. Post-translationally, the soluble form derives from the membrane form by proteolytic processing. The membrane-bound form is further proteolytically processed by SPPL2A or SPPL2B through regulated intramembrane proteolysis producing TNF intracellular domains (ICD1 and ICD2) released in the cytosol and TNF C-domain 1 and C-domain 2 secreted into the extracellular space. The membrane form, but not the soluble form, is phosphorylated on serine residues. Dephosphorylation of the membrane form occurs by binding to soluble TNFRSF1A/TNFR1. In terms of processing, O-glycosylated; glycans contain galactose, N-acetylgalactosamine and N-acetylneuraminic acid. Post-translationally, the soluble form is demyristoylated by SIRT6, promoting its secretion.

The protein resides in the cell membrane. The protein localises to the membrane. It is found in the secreted. In terms of biological role, cytokine that binds to TNFRSF1A/TNFR1 and TNFRSF1B/TNFBR. It is mainly secreted by macrophages and can induce cell death of certain tumor cell lines. It is potent pyrogen causing fever by direct action or by stimulation of interleukin-1 secretion and is implicated in the induction of cachexia, Under certain conditions it can stimulate cell proliferation and induce cell differentiation. Induces insulin resistance in adipocytes via inhibition of insulin-induced IRS1 tyrosine phosphorylation and insulin-induced glucose uptake. Induces GKAP42 protein degradation in adipocytes which is partially responsible for TNF-induced insulin resistance. Plays a role in angiogenesis by inducing VEGF production synergistically with IL1B and IL6. Functionally, the TNF intracellular domain (ICD) form induces IL12 production in dendritic cells. This Delphinapterus leucas (Beluga whale) protein is Tumor necrosis factor (TNF).